Reading from the N-terminus, the 203-residue chain is Glycerol-3-phosphate acyltransferase (203 aa).

A run of 5 helical transmembrane segments spans residues M10–L30, G59–A79, A87–F107, F116–L136, and L160–F180.

The protein belongs to the PlsY family. In terms of assembly, probably interacts with PlsX.

The protein localises to the cell inner membrane. The enzyme catalyses an acyl phosphate + sn-glycerol 3-phosphate = a 1-acyl-sn-glycero-3-phosphate + phosphate. The protein operates within lipid metabolism; phospholipid metabolism. Catalyzes the transfer of an acyl group from acyl-phosphate (acyl-PO(4)) to glycerol-3-phosphate (G3P) to form lysophosphatidic acid (LPA). This enzyme utilizes acyl-phosphate as fatty acyl donor, but not acyl-CoA or acyl-ACP. This is Glycerol-3-phosphate acyltransferase from Ruegeria pomeroyi (strain ATCC 700808 / DSM 15171 / DSS-3) (Silicibacter pomeroyi).